We begin with the raw amino-acid sequence, 427 residues long: Glutamate-1-semialdehyde 2,1-aminomutase (427 aa).

Residue Lys265 is modified to N6-(pyridoxal phosphate)lysine.

This sequence belongs to the class-III pyridoxal-phosphate-dependent aminotransferase family. HemL subfamily. In terms of assembly, homodimer. Pyridoxal 5'-phosphate serves as cofactor.

It localises to the cytoplasm. The catalysed reaction is (S)-4-amino-5-oxopentanoate = 5-aminolevulinate. It functions in the pathway porphyrin-containing compound metabolism; protoporphyrin-IX biosynthesis; 5-aminolevulinate from L-glutamyl-tRNA(Glu): step 2/2. This Pseudomonas aeruginosa (strain LESB58) protein is Glutamate-1-semialdehyde 2,1-aminomutase.